The primary structure comprises 347 residues: Bombesin receptor-activated protein C6orf89 homolog (347 aa).

The Cytoplasmic portion of the chain corresponds to 1 to 58; sequence MDLAANEISIYDKLSETVDLVRQTGHQCGMSEKAIEKFIRQLLEKNEPQRPPPQYPLL. A helical transmembrane segment spans residues 59–79; that stretch reads IVVYKVLATLGLILLTAYFVI. Over 80–347 the chain is Extracellular; sequence QPFSPLAPEP…ICDGTAFSEL (268 aa).

Homodimer. Interacts with BRS3. Interacts (via N-terminus) with SIN3B. Post-translationally, glycosylated.

Its subcellular location is the golgi apparatus membrane. It localises to the cytoplasm. Its function is as follows. Exhibits histone deacetylase (HDAC) enhancer properties. May play a role in cell cycle progression and wound repair of bronchial epithelial cells. This chain is Bombesin receptor-activated protein C6orf89 homolog, found in Pongo abelii (Sumatran orangutan).